The chain runs to 91 residues: Small ribosomal subunit protein bS18 (91 aa).

Belongs to the bacterial ribosomal protein bS18 family. In terms of assembly, part of the 30S ribosomal subunit. Forms a tight heterodimer with protein bS6.

Its function is as follows. Binds as a heterodimer with protein bS6 to the central domain of the 16S rRNA, where it helps stabilize the platform of the 30S subunit. This is Small ribosomal subunit protein bS18 from Paraburkholderia phytofirmans (strain DSM 17436 / LMG 22146 / PsJN) (Burkholderia phytofirmans).